Here is a 106-residue protein sequence, read N- to C-terminus: Small ribosomal subunit protein uS10 (106 aa).

The protein belongs to the universal ribosomal protein uS10 family. In terms of assembly, part of the 30S ribosomal subunit.

Its function is as follows. Involved in the binding of tRNA to the ribosomes. The sequence is that of Small ribosomal subunit protein uS10 from Pyrobaculum arsenaticum (strain DSM 13514 / JCM 11321 / PZ6).